The primary structure comprises 448 residues: Ribosomal protein uS12 methylthiotransferase RimO (448 aa).

Residues Gln7–Ser119 enclose the MTTase N-terminal domain. [4Fe-4S] cluster contacts are provided by Cys16, Cys50, Cys82, Cys151, Cys155, and Cys158. The region spanning Ile137–Ala366 is the Radical SAM core domain.

The protein belongs to the methylthiotransferase family. RimO subfamily. The cofactor is [4Fe-4S] cluster.

The protein resides in the cytoplasm. It carries out the reaction L-aspartate(89)-[ribosomal protein uS12]-hydrogen + (sulfur carrier)-SH + AH2 + 2 S-adenosyl-L-methionine = 3-methylsulfanyl-L-aspartate(89)-[ribosomal protein uS12]-hydrogen + (sulfur carrier)-H + 5'-deoxyadenosine + L-methionine + A + S-adenosyl-L-homocysteine + 2 H(+). In terms of biological role, catalyzes the methylthiolation of an aspartic acid residue of ribosomal protein uS12. The protein is Ribosomal protein uS12 methylthiotransferase RimO of Helicobacter hepaticus (strain ATCC 51449 / 3B1).